Consider the following 83-residue polypeptide: MQNDAGEFVDLYVPRKCSASNRIIGAKDHASIQINIAEVDKVTGRFNSQYKTYAICGAIRRMGESDDSILRLAKNDCIVSKNF.

It belongs to the eukaryotic ribosomal protein eS21 family. In terms of assembly, component of the 40S small ribosomal subunit.

The protein localises to the cytoplasm. It localises to the cytosol. The protein resides in the rough endoplasmic reticulum. Its function is as follows. Component of the small ribosomal subunit. The ribosome is a large ribonucleoprotein complex responsible for the synthesis of proteins in the cell. The chain is Small ribosomal subunit protein eS21 (rps21) from Xenopus tropicalis (Western clawed frog).